Reading from the N-terminus, the 38-residue chain is IFINVKCSSPQQCLKPCKAAFGISAGGKCINGKCKCYP.

3 disulfides stabilise this stretch: C7–C29, C13–C34, and C17–C36.

Belongs to the short scorpion toxin superfamily. Potassium channel inhibitor family. Alpha-KTx 02 subfamily. In terms of tissue distribution, expressed by the venom gland.

It localises to the secreted. Selective inhibitor of voltage-gated potassium channels, blocks the Kv1.2/KCNA2 (Kd=1.3 nM) and Kv1.3/KCNA3 (Kd=7.2 nM) channels. Association and dissociation rates of the toxin are slower for Kv1.2/KCNA2 than for Kv1.3/KCNA3. The sequence is that of Potassium channel toxin alpha-KTx 2.13 from Centruroides suffusus (Durango bark scorpion).